We begin with the raw amino-acid sequence, 194 residues long: Imidazoleglycerol-phosphate dehydratase (194 aa).

The protein belongs to the imidazoleglycerol-phosphate dehydratase family.

The protein localises to the cytoplasm. The enzyme catalyses D-erythro-1-(imidazol-4-yl)glycerol 3-phosphate = 3-(imidazol-4-yl)-2-oxopropyl phosphate + H2O. It participates in amino-acid biosynthesis; L-histidine biosynthesis; L-histidine from 5-phospho-alpha-D-ribose 1-diphosphate: step 6/9. This chain is Imidazoleglycerol-phosphate dehydratase, found in Bacillus cereus (strain B4264).